A 287-amino-acid chain; its full sequence is Large ribosomal subunit protein uL2 (287 aa).

The segment at 221-287 is disordered; the sequence is RGSVMNPCDH…SKRSRGGRDS (67 aa). Residues 258–287 are compositionally biased toward basic residues; it reads KTRKKNKPSNKLVVRRRRRISKRSRGGRDS.

It belongs to the universal ribosomal protein uL2 family. In terms of assembly, part of the 50S ribosomal subunit. Forms a bridge to the 30S subunit in the 70S ribosome.

One of the primary rRNA binding proteins. Required for association of the 30S and 50S subunits to form the 70S ribosome, for tRNA binding and peptide bond formation. It has been suggested to have peptidyltransferase activity; this is somewhat controversial. Makes several contacts with the 16S rRNA in the 70S ribosome. This is Large ribosomal subunit protein uL2 from Prochlorococcus marinus (strain MIT 9215).